Here is a 561-residue protein sequence, read N- to C-terminus: MACPF domain-containing protein CAD1 (561 aa).

Residues 11–314 (VPSSEALTTT…PPIEDLQYFL (304 aa)) enclose the MACPF domain. The tract at residues 489–514 (VASSGRLEPGGPSTSSSTEEVSGQSG) is disordered. Residues 500-513 (PSTSSSTEEVSGQS) are compositionally biased toward polar residues.

Belongs to the complement C6/C7/C8/C9 (TC 1.C.39) family. In terms of tissue distribution, mainly expressed in the vascular system.

Functionally, negatively controls the salicylic acid (SA)-mediated pathway of programmed cell death in plant immunity. The chain is MACPF domain-containing protein CAD1 (CAD1) from Arabidopsis thaliana (Mouse-ear cress).